The primary structure comprises 334 residues: tRNA dimethylallyltransferase (334 aa).

Residue 22–29 (GPTASGKT) coordinates ATP. Position 24-29 (24-29 (TASGKT)) interacts with substrate.

This sequence belongs to the IPP transferase family. Monomer. Mg(2+) serves as cofactor.

It carries out the reaction adenosine(37) in tRNA + dimethylallyl diphosphate = N(6)-dimethylallyladenosine(37) in tRNA + diphosphate. Functionally, catalyzes the transfer of a dimethylallyl group onto the adenine at position 37 in tRNAs that read codons beginning with uridine, leading to the formation of N6-(dimethylallyl)adenosine (i(6)A). The protein is tRNA dimethylallyltransferase of Rhodopirellula baltica (strain DSM 10527 / NCIMB 13988 / SH1).